The following is a 182-amino-acid chain: Protein Syd (182 aa).

It belongs to the Syd family.

Its subcellular location is the cell inner membrane. Functionally, interacts with the SecY protein in vivo. May bind preferentially to an uncomplexed state of SecY, thus functioning either as a chelating agent for excess SecY in the cell or as a regulatory factor that negatively controls the translocase function. This Pectobacterium atrosepticum (strain SCRI 1043 / ATCC BAA-672) (Erwinia carotovora subsp. atroseptica) protein is Protein Syd.